The following is a 137-amino-acid chain: Thionin BTH7 (137 aa).

An N-terminal signal peptide occupies residues 1–28 (MATNKSIKSVVICVLILGLVLEQVQVEG). 4 disulfide bridges follow: C31-C68, C32-C60, C40-C58, and C44-C54. Positions 75-137 (LNLLPESGEP…DGEVIQSVEA (63 aa)) are cleaved as a propeptide — acidic domain.

Belongs to the plant thionin (TC 1.C.44) family. 4 C-C subfamily.

The protein localises to the secreted. Functionally, thionins are small plant proteins which are toxic to animal cells. They seem to exert their toxic effect at the level of the cell membrane. Their precise function is not known. This is Thionin BTH7 from Hordeum vulgare (Barley).